Consider the following 381-residue polypeptide: Creatine kinase B-type (381 aa).

Serine 4 carries the phosphoserine modification. Positions lysine 11 to glycine 98 constitute a Phosphagen kinase N-terminal domain. A Phosphothreonine modification is found at threonine 35. Lysine 45 participates in a covalent cross-link: Glycyl lysine isopeptide (Lys-Gly) (interchain with G-Cter in ubiquitin). Valine 72 provides a ligand contact to creatine. A compositionally biased stretch (basic and acidic residues) spans arginine 96–leucine 110. The interval arginine 96–proline 123 is disordered. Glycyl lysine isopeptide (Lys-Gly) (interchain with G-Cter in ubiquitin) cross-links involve residues lysine 101 and lysine 107. The residue at position 125 (tyrosine 125) is a Phosphotyrosine. The Phosphagen kinase C-terminal domain occupies tyrosine 125–leucine 367. Residues serine 128 to arginine 132, arginine 130, arginine 132, and histidine 191 contribute to the ATP site. An internal MTS-like signal region spans residues arginine 130–arginine 138. Serine 199 carries the phosphoserine modification. Position 232 (glutamate 232) interacts with creatine. Arginine 236 contacts ATP. The residue at position 269 (tyrosine 269) is a 3'-nitrotyrosine. Serine 285 contacts creatine. ATP-binding positions include arginine 292, arginine 320, arginine 320–valine 325, and aspartate 335. Threonine 322 is modified (phosphothreonine). Residue lysine 381 forms a Glycyl lysine isopeptide (Lys-Gly) (interchain with G-Cter in ubiquitin) linkage.

Belongs to the ATP:guanido phosphotransferase family. As to quaternary structure, dimer of identical or non-identical chains, which can be either B (brain type) or M (muscle type). With MM being the major form in skeletal muscle and myocardium, MB existing in myocardium, and BB existing in many tissues, especially brain. Interacts with SLC12A6 (via C-terminus); the interaction may be required for SLC12A6 potassium-chloride cotransport activity. In terms of processing, ubiquitinated by the ECS(ASB9) complex, leading to its degradation by the proteasome.

It localises to the cytoplasm. The protein resides in the cytosol. It is found in the mitochondrion. Its subcellular location is the cell membrane. The catalysed reaction is creatine + ATP = N-phosphocreatine + ADP + H(+). In terms of biological role, reversibly catalyzes the transfer of phosphate between ATP and various phosphogens (e.g. creatine phosphate). Creatine kinase isoenzymes play a central role in energy transduction in tissues with large, fluctuating energy demands, such as skeletal muscle, heart, brain and spermatozoa. Acts as a key regulator of adaptive thermogenesis as part of the futile creatine cycle: localizes to the mitochondria of thermogenic fat cells and acts by mediating phosphorylation of creatine to initiate a futile cycle of creatine phosphorylation and dephosphorylation. During the futile creatine cycle, creatine and N-phosphocreatine are in a futile cycle, which dissipates the high energy charge of N-phosphocreatine as heat without performing any mechanical or chemical work. The polypeptide is Creatine kinase B-type (CKB) (Canis lupus familiaris (Dog)).